Consider the following 100-residue polypeptide: Large ribosomal subunit protein uL23 (100 aa).

Belongs to the universal ribosomal protein uL23 family. In terms of assembly, part of the 50S ribosomal subunit. Contacts protein L29, and trigger factor when it is bound to the ribosome.

Functionally, one of the early assembly proteins it binds 23S rRNA. One of the proteins that surrounds the polypeptide exit tunnel on the outside of the ribosome. Forms the main docking site for trigger factor binding to the ribosome. This chain is Large ribosomal subunit protein uL23, found in Mycobacterium leprae (strain Br4923).